Here is a 419-residue protein sequence, read N- to C-terminus: Transcription factor 7 (419 aa).

The segment covering 1–12 (MPQLDSGGGGAG) has biased composition (gly residues). Positions 1–60 (MPQLDSGGGGAGRGDDLGAPDELLAFQDEGEEQDDKNRDSPVGPERDLAELKSSLVNESE) are CTNNB1-binding. Disordered stretches follow at residues 1-111 (MPQL…LKAP) and 134-200 (PASG…SGFY). Composition is skewed to basic and acidic residues over residues 35–50 (DKNR…DLAE) and 86–109 (LGRE…DGLK). Pro residues predominate over residues 143-158 (QPQPPLHNKPGQPPHG). The segment at residues 304–372 (IKKPLNAFML…LHMQLYPGWS (69 aa)) is a DNA-binding region (HMG box). The interval 374 to 406 (RDNYGKKKRRSREKHQESTTGGKRNAFGTYPEK) is disordered. The short motif at 379–385 (KKKRRSR) is the Nuclear localization signal element.

It belongs to the TCF/LEF family. As to quaternary structure, binds the armadillo repeat of CTNNB1 and forms a stable complex. Binds TLE5, TLE1, TLE2, TLE3 and TLE4. Interacts with MLLT11. Interacts with DAZAP2. Interacts (via N-terminus) with SOX13; inhibits WNT-mediated transcriptional activity. In terms of tissue distribution, T-cell specific. Expressed in triple negative 2 subpopulations of T-cells and both the gamma-delta and alpha-beta T-cell lineages. Expressed in Il7 receptor positive innate-like T-cells in the mesenteric lymph nodes and spleen (at protein level).

It is found in the nucleus. Transcriptional activator involved in T-cell lymphocyte differentiation. Necessary for the survival of CD4(+) CD8(+) immature thymocytes. Isoforms lacking the N-terminal CTNNB1 binding domain cannot fulfill this role. Binds to the T-lymphocyte-specific enhancer element (5'-WWCAAAG-3') found in the promoter of the CD3E gene. Represses expression of the T-cell receptor gamma gene in alpha-beta T-cell lineages. Inhibits the developmental program of IL17A effector gamma-delta T-cell subsets via regulating the transcription of T-cell lineage effector proteins. Required for the development of natural killer receptor-positive lymphoid tissue inducer T-cells. TLE1, TLE2, TLE3 and TLE4 repress transactivation mediated by TCF7 and CTNNB1. May also act as feedback transcriptional repressor of CTNNB1 and TCF7L2 target genes. The protein is Transcription factor 7 of Mus musculus (Mouse).